Reading from the N-terminus, the 120-residue chain is UPF0102 protein Pfl01_4685 (120 aa).

This sequence belongs to the UPF0102 family.

The sequence is that of UPF0102 protein Pfl01_4685 from Pseudomonas fluorescens (strain Pf0-1).